Reading from the N-terminus, the 576-residue chain is Hemagglutinin-neuraminidase (576 aa).

The segment covering 1–10 (MDGDRGKRDS) has biased composition (basic and acidic residues). A disordered region spans residues 1–24 (MDGDRGKRDSYWSTSPSGSTTKLA). The Intravirion segment spans residues 1–37 (MDGDRGKRDSYWSTSPSGSTTKLASGWERSSKVDTWL). The interval 10–14 (SYWST) is incorporation in virion. Polar residues predominate over residues 11–23 (YWSTSPSGSTTKL). A helical membrane pass occupies residues 38–58 (LILSFTQWALSIATVIICIII). Residues 59–140 (SARQGYSTKE…RQELTQLCES (82 aa)) are involved in interaction with F protein. The Virion surface portion of the chain corresponds to 59–576 (SARQGYSTKE…SIPKLCKAES (518 aa)). Residue Asn-77 is glycosylated (N-linked (GlcNAc...) asparagine; by host). Intrachain disulfides connect Cys-192/Cys-216, Cys-258/Cys-271, Cys-357/Cys-469, and Cys-463/Cys-473. Positions 254–259 (NRKSCS) are involved in neuraminidase activity. Residues Asn-499 and Asn-511 are each glycosylated (N-linked (GlcNAc...) asparagine; by host). A disulfide bond links Cys-536 and Cys-545.

Belongs to the paramyxoviruses hemagglutinin-neuraminidase family. As to quaternary structure, homotetramer; composed of disulfide-linked homodimers. Interacts with F protein trimer. In terms of processing, N-glycosylated; glycans consist of a mixture of high mannose-type oligosaccharides and of complex-type oligosaccharides.

It is found in the virion membrane. The protein localises to the host cell membrane. It catalyses the reaction Hydrolysis of alpha-(2-&gt;3)-, alpha-(2-&gt;6)-, alpha-(2-&gt;8)- glycosidic linkages of terminal sialic acid residues in oligosaccharides, glycoproteins, glycolipids, colominic acid and synthetic substrates.. Attaches the virus to sialic acid-containing cell receptors and thereby initiating infection. Binding of HN protein to the receptor induces a conformational change that allows the F protein to trigger virion/cell membranes fusion. Its function is as follows. Neuraminidase activity ensures the efficient spread of the virus by dissociating the mature virions from the neuraminic acid containing glycoproteins. In Sendai virus (strain Harris) (SeV), this protein is Hemagglutinin-neuraminidase (HN).